The chain runs to 131 residues: Small ribosomal subunit protein bS6 (131 aa).

It belongs to the bacterial ribosomal protein bS6 family.

Its function is as follows. Binds together with bS18 to 16S ribosomal RNA. The chain is Small ribosomal subunit protein bS6 from Borrelia hermsii (strain HS1 / DAH).